The sequence spans 209 residues: 8-oxoguanine DNA glycosylase/AP lyase (209 aa).

Catalysis depends on residues Lys132 and Asp150.

Belongs to the type-2 OGG1 family.

The catalysed reaction is 2'-deoxyribonucleotide-(2'-deoxyribose 5'-phosphate)-2'-deoxyribonucleotide-DNA = a 3'-end 2'-deoxyribonucleotide-(2,3-dehydro-2,3-deoxyribose 5'-phosphate)-DNA + a 5'-end 5'-phospho-2'-deoxyribonucleoside-DNA + H(+). Functionally, catalyzes the excision of an oxidatively damaged form of guanine (7,8-dihydro-8-oxoguanine = 8-oxoG) from DNA. Also cleaves the DNA backbone at apurinic/apyrimidinic sites (AP sites). In Picrophilus torridus (strain ATCC 700027 / DSM 9790 / JCM 10055 / NBRC 100828 / KAW 2/3), this protein is 8-oxoguanine DNA glycosylase/AP lyase.